Consider the following 185-residue polypeptide: Keratin-associated protein 4-8 (185 aa).

Tandem repeats lie at residues 14–18 (GCGQD), 19–23 (LCQET), 24–28 (CCCPS), 39–43 (CYRPS), 44–48 (YSVSC), 49–53 (CCRPQ), 54–58 (CCQSV), 59–63 (CCQPT), 64–68 (CCRPS), 69–73 (CCVSS), 74–78 (CCKPQ), 79–83 (CCQSV), 84–88 (CCQPT), 89–93 (CCHPS), 94–98 (CCISS), 99–103 (CCRPS), 104–108 (CCVSS), 109–113 (CCKPQ), 114–118 (CCQSV), 119–123 (CCQPN), 124–128 (CCRPS), 134–138 (CCRPS), 139–143 (CCESS), 144–148 (CCRPC), and 149–164 (CCLRPVCGRVSCHTTC). A 25 X 5 AA repeats of C-C-[IKRQVHEC]-[SPRT]-[STCVQPR] region spans residues 14–164 (GCGQDLCQET…CGRVSCHTTC (151 aa)).

The protein belongs to the KRTAP type 4 family. Interacts with hair keratins. In terms of tissue distribution, expressed in the hair follicles.

In terms of biological role, in the hair cortex, hair keratin intermediate filaments are embedded in an interfilamentous matrix, consisting of hair keratin-associated proteins (KRTAP), which are essential for the formation of a rigid and resistant hair shaft through their extensive disulfide bond cross-linking with abundant cysteine residues of hair keratins. The matrix proteins include the high-sulfur and high-glycine-tyrosine keratins. The polypeptide is Keratin-associated protein 4-8 (KRTAP4-8) (Homo sapiens (Human)).